Reading from the N-terminus, the 546-residue chain is Hydroxylamine reductase (546 aa).

4 residues coordinate [4Fe-4S] cluster: C3, C6, C18, and C25. 8 residues coordinate hybrid [4Fe-2O-2S] cluster: H245, E269, C313, C401, C429, C454, E488, and K490. A Cysteine persulfide modification is found at C401.

It belongs to the HCP family. Requires [4Fe-4S] cluster as cofactor. It depends on hybrid [4Fe-2O-2S] cluster as a cofactor.

The protein resides in the cytoplasm. The enzyme catalyses A + NH4(+) + H2O = hydroxylamine + AH2 + H(+). Inhibited by cyanide and by sulfide and iron reagents such as dithioerythritol, 2,2'-dipyridyl and o-phenanthroline. Could be involved in assimilation and/or detoxification of hydroxylamine, which is a toxic compound that may be formed during nitrate/nitrite assimilation. Catalyzes the reduction of hydroxylamine to form NH(3) and H(2)O. It has a low reductase activity with FAD, FMN, benzyl viologen and bromphenol blue as electrons donors, but it is not able to use NAD or NADP. This chain is Hydroxylamine reductase, found in Rhodobacter capsulatus (Rhodopseudomonas capsulata).